The sequence spans 262 residues: Acyl-[acyl-carrier-protein]--UDP-N-acetylglucosamine O-acyltransferase (262 aa).

The protein belongs to the transferase hexapeptide repeat family. LpxA subfamily. As to quaternary structure, homotrimer.

Its subcellular location is the cytoplasm. It carries out the reaction a (3R)-hydroxyacyl-[ACP] + UDP-N-acetyl-alpha-D-glucosamine = a UDP-3-O-[(3R)-3-hydroxyacyl]-N-acetyl-alpha-D-glucosamine + holo-[ACP]. The protein operates within glycolipid biosynthesis; lipid IV(A) biosynthesis; lipid IV(A) from (3R)-3-hydroxytetradecanoyl-[acyl-carrier-protein] and UDP-N-acetyl-alpha-D-glucosamine: step 1/6. Its function is as follows. Involved in the biosynthesis of lipid A, a phosphorylated glycolipid that anchors the lipopolysaccharide to the outer membrane of the cell. The protein is Acyl-[acyl-carrier-protein]--UDP-N-acetylglucosamine O-acyltransferase of Campylobacter concisus (strain 13826).